Reading from the N-terminus, the 56-residue chain is MFSQSACVQVHIKTNELHTAVVEKVILAMISSCRTDNNQALHKLLHVAVCEENYNV.

Male determiner protein (M-factor) that controls male somatic sexual differentiation. Acts as a dominant factor that regulates the mRNA splicing of doublesex (dsx) transcripts and promotes expression of male splice forms of dsx. This Anopheles gambiae (African malaria mosquito) protein is Male determiner protein Yob.